The sequence spans 90 residues: FMRFamide-like neuropeptides 27 (90 aa).

A signal peptide spans 1–24 (MFSFRKFLAFMLIVIALMASFSSA). Positions 25 to 36 (QPIDEERPIFME) are excised as a propeptide. F61 is modified (phenylalanine amide). Residues 65 to 90 (SSSPSDISMAELRAIYGGGPVEYVQL) constitute a propeptide that is removed on maturation.

This sequence belongs to the FARP (FMRFamide related peptide) family.

Its subcellular location is the secreted. Its function is as follows. FMRFamides and FMRFamide-like peptides are neuropeptides. This chain is FMRFamide-like neuropeptides 27, found in Caenorhabditis briggsae.